A 366-amino-acid polypeptide reads, in one-letter code: Quinolinate synthase (366 aa).

Iminosuccinate contacts are provided by His-44 and Ser-61. [4Fe-4S] cluster is bound at residue Cys-108. Iminosuccinate is bound by residues 139–141 and Ser-160; that span reads YIN. Cys-228 serves as a coordination point for [4Fe-4S] cluster. Iminosuccinate contacts are provided by residues 254-256 and Thr-271; that span reads HPE. Position 318 (Cys-318) interacts with [4Fe-4S] cluster.

Belongs to the quinolinate synthase family. Type 3 subfamily. The cofactor is [4Fe-4S] cluster.

It localises to the cytoplasm. The enzyme catalyses iminosuccinate + dihydroxyacetone phosphate = quinolinate + phosphate + 2 H2O + H(+). Its pathway is cofactor biosynthesis; NAD(+) biosynthesis; quinolinate from iminoaspartate: step 1/1. Functionally, catalyzes the condensation of iminoaspartate with dihydroxyacetone phosphate to form quinolinate. This chain is Quinolinate synthase, found in Listeria monocytogenes serovar 1/2a (strain ATCC BAA-679 / EGD-e).